The sequence spans 118 residues: Small ribosomal subunit protein uS13 (118 aa).

A disordered region spans residues 94 to 118 (GLPLRGQRTRTNARTRKGPRKAIRK).

This sequence belongs to the universal ribosomal protein uS13 family. In terms of assembly, part of the 30S ribosomal subunit. Forms a loose heterodimer with protein S19. Forms two bridges to the 50S subunit in the 70S ribosome.

Located at the top of the head of the 30S subunit, it contacts several helices of the 16S rRNA. In the 70S ribosome it contacts the 23S rRNA (bridge B1a) and protein L5 of the 50S subunit (bridge B1b), connecting the 2 subunits; these bridges are implicated in subunit movement. Contacts the tRNAs in the A and P-sites. The polypeptide is Small ribosomal subunit protein uS13 (Xanthomonas axonopodis pv. citri (strain 306)).